Here is a 498-residue protein sequence, read N- to C-terminus: Glycerol kinase (498 aa).

Thr-12 provides a ligand contact to ADP. The ATP site is built by Thr-12, Thr-13, and Ser-14. Thr-12 is a sn-glycerol 3-phosphate binding site. Arg-16 lines the ADP pocket. Arg-82, Glu-83, and Tyr-134 together coordinate sn-glycerol 3-phosphate. Glycerol is bound by residues Arg-82, Glu-83, and Tyr-134. His-230 carries the post-translational modification Phosphohistidine; by HPr. Asp-244 serves as a coordination point for sn-glycerol 3-phosphate. Residues Asp-244 and Gln-245 each contribute to the glycerol site. Positions 266 and 309 each coordinate ADP. 4 residues coordinate ATP: Thr-266, Gly-309, Gln-313, and Gly-410. Gly-410 and Asn-414 together coordinate ADP.

Belongs to the FGGY kinase family. As to quaternary structure, homotetramer and homodimer (in equilibrium). The phosphoenolpyruvate-dependent sugar phosphotransferase system (PTS), including enzyme I, and histidine-containing protein (HPr) are required for the phosphorylation, which leads to the activation of the enzyme.

It catalyses the reaction glycerol + ATP = sn-glycerol 3-phosphate + ADP + H(+). It participates in polyol metabolism; glycerol degradation via glycerol kinase pathway; sn-glycerol 3-phosphate from glycerol: step 1/1. Its activity is regulated as follows. Activated by phosphorylation and inhibited by fructose 1,6-bisphosphate (FBP). Key enzyme in the regulation of glycerol uptake and metabolism. Catalyzes the phosphorylation of glycerol to yield sn-glycerol 3-phosphate. This Staphylococcus aureus (strain MSSA476) protein is Glycerol kinase.